A 212-amino-acid polypeptide reads, in one-letter code: Regulatory protein RecX (212 aa).

Belongs to the RecX family.

The protein localises to the cytoplasm. In terms of biological role, modulates RecA activity. The sequence is that of Regulatory protein RecX from Clostridioides difficile (strain 630) (Peptoclostridium difficile).